A 105-amino-acid polypeptide reads, in one-letter code: Thioredoxin (105 aa).

The 104-residue stretch at 2–105 (VKQIESKTAF…KLEATINELV (104 aa)) folds into the Thioredoxin domain. Lys3 carries the N6-acetyllysine modification. At Lys8 the chain carries N6-succinyllysine. Residues Cys32 and Cys35 each act as nucleophile in the active site. Cys32 and Cys35 are oxidised to a cystine. Lys39 carries the post-translational modification N6-acetyllysine. Residues Cys62 and Cys69 each carry the S-nitrosocysteine modification. S-nitrosocysteine; alternate is present on Cys73. Lys94 carries the post-translational modification N6-acetyllysine; alternate. N6-succinyllysine; alternate is present on Lys94.

The protein belongs to the thioredoxin family. As to quaternary structure, homodimer; disulfide-linked. Interacts with TXNIP through the redox-active site. Interacts with MAP3K5 and CASP3. In case of infection, interacts with S.typhimurium protein slrP. Interacts with APEX1; the interaction stimulates the FOS/JUN AP-1 DNA-binding activity in a redox-dependent manner. In the fully reduced protein, both Cys-69 and Cys-73 are nitrosylated in response to nitric oxide (NO). When two disulfide bonds are present in the protein, only Cys-73 is nitrosylated. Cys-73 can serve as donor for nitrosylation of target proteins. In terms of processing, in case of infection, ubiquitinated by S.typhimurium protein slrP, leading to its degradation.

Its subcellular location is the nucleus. It localises to the cytoplasm. The protein resides in the secreted. Participates in various redox reactions through the reversible oxidation of its active center dithiol to a disulfide and catalyzes dithiol-disulfide exchange reactions. Plays a role in the reversible S-nitrosylation of cysteine residues in target proteins, and thereby contributes to the response to intracellular nitric oxide. Nitrosylates the active site Cys of CASP3 in response to nitric oxide (NO), and thereby inhibits caspase-3 activity. Induces the FOS/JUN AP-1 DNA-binding activity in ionizing radiation (IR) cells through its oxidation/reduction status and stimulates AP-1 transcriptional activity. Its function is as follows. ADF augments the expression of the interleukin-2 receptor TAC (IL2R/P55). The polypeptide is Thioredoxin (TXN) (Homo sapiens (Human)).